Consider the following 218-residue polypeptide: Ras-related protein Rab-27B (218 aa).

N-acetylthreonine is present on threonine 2. A GTP-binding site is contributed by 16–24 (GDSGVGKTT). The Effector region signature appears at 38-46 (FITTVGIDF). GTP-binding positions include 74 to 78 (DTAGQ), 133 to 136 (NKAD), and 163 to 165 (SAA). Residues cysteine 123 and cysteine 188 are joined by a disulfide bond. A disordered region spans residues 193-218 (HIPDTVNGSSSGKLDGEKSAEKKCAC). Positions 206 to 218 (LDGEKSAEKKCAC) are enriched in basic and acidic residues. Residues cysteine 216 and cysteine 218 are each lipidated (S-geranylgeranyl cysteine). Cysteine 218 carries the post-translational modification Cysteine methyl ester.

It belongs to the small GTPase superfamily. Rab family. Interacts with SYTL2, SYTL4, MYRIP and MLPH. Interacts with RPH3A and RPH3A. Interacts (GDP-bound form preferentially) with DENND10. In terms of tissue distribution, expressed at an extraordinary high level (0.1% of total protein) in urothelium.

It is found in the membrane. The protein localises to the late endosome. The catalysed reaction is GTP + H2O = GDP + phosphate + H(+). Regulated by guanine nucleotide exchange factors (GEFs) which promote the exchange of bound GDP for free GTP, GTPase activating proteins (GAPs) which increase the GTP hydrolysis activity, and GDP dissociation inhibitors which inhibit the dissociation of the nucleotide from the GTPase. Activated by GEFs such as DENND10. In terms of biological role, small GTPase which cycles between active GTP-bound and inactive GDP-bound states. In its active state, binds to a variety of effector proteins to regulate homeostasis of late endocytic pathway, including endosomal positioning, maturation and secretion. Plays a role in NTRK2/TRKB axonal anterograde transport by facilitating the association of NTRK2/TRKB with KLC1. May be involved in targeting uroplakins to urothelial apical membranes. The sequence is that of Ras-related protein Rab-27B (RAB27B) from Bos taurus (Bovine).